A 289-amino-acid polypeptide reads, in one-letter code: Protease HtpX homolog (289 aa).

2 consecutive transmembrane segments (helical) span residues 3–23 and 28–48; these read IVGT…WFFF and TILA…YKVG. His-129 lines the Zn(2+) pocket. Glu-130 is a catalytic residue. His-133 lines the Zn(2+) pocket. The next 2 membrane-spanning stretches (helical) occupy residues 144–164 and 172–192; these read LGQG…LFSG and FLAI…VLAI. Glu-197 lines the Zn(2+) pocket. The disordered stretch occupies residues 222 to 250; that stretch reads SQGNEQAAQQQRQRTSRGRGRRQRGQRND. Over residues 235–246 the composition is skewed to basic residues; that stretch reads RTSRGRGRRQRG.

This sequence belongs to the peptidase M48B family. Zn(2+) serves as cofactor.

It is found in the cell membrane. The polypeptide is Protease HtpX homolog (Halobacterium salinarum (strain ATCC 700922 / JCM 11081 / NRC-1) (Halobacterium halobium)).